The chain runs to 556 residues: ATP synthase subunit beta-2, mitochondrial (556 aa).

Positions 1–20 are enriched in low complexity; sequence MASRRVLSSLLRSSSGRSAA. Residues 1–37 form a disordered region; it reads MASRRVLSSLLRSSSGRSAAKLVNRNPRLPSPSPARH. The N-terminal 51 residues, 1 to 51, are a transit peptide targeting the mitochondrion; that stretch reads MASRRVLSSLLRSSSGRSAAKLVNRNPRLPSPSPARHAAPCSYLLGRVAEY. S59 is modified (phosphoserine). Position 231-238 (231-238) interacts with ATP; sequence GGAGVGKT.

The protein belongs to the ATPase alpha/beta chains family. As to quaternary structure, F-type ATPases have 2 components, CF(1) - the catalytic core - and CF(0) - the membrane proton channel. CF(1) has five subunits: alpha(3), beta(3), gamma(1), delta(1), epsilon(1). CF(0) has three main subunits: a, b and c.

The protein resides in the mitochondrion. It is found in the mitochondrion inner membrane. The enzyme catalyses ATP + H2O + 4 H(+)(in) = ADP + phosphate + 5 H(+)(out). In terms of biological role, mitochondrial membrane ATP synthase (F(1)F(0) ATP synthase or Complex V) produces ATP from ADP in the presence of a proton gradient across the membrane which is generated by electron transport complexes of the respiratory chain. F-type ATPases consist of two structural domains, F(1) - containing the extramembraneous catalytic core, and F(0) - containing the membrane proton channel, linked together by a central stalk and a peripheral stalk. During catalysis, ATP synthesis in the catalytic domain of F(1) is coupled via a rotary mechanism of the central stalk subunits to proton translocation. Subunits alpha and beta form the catalytic core in F(1). Rotation of the central stalk against the surrounding alpha(3)beta(3) subunits leads to hydrolysis of ATP in three separate catalytic sites on the beta subunits. This Arabidopsis thaliana (Mouse-ear cress) protein is ATP synthase subunit beta-2, mitochondrial.